The following is a 436-amino-acid chain: Glucose-1-phosphate adenylyltransferase (436 aa).

Residues Tyr112, Gly178, 193 to 194 (EK), and Ser211 contribute to the alpha-D-glucose 1-phosphate site.

The protein belongs to the bacterial/plant glucose-1-phosphate adenylyltransferase family. As to quaternary structure, homotetramer.

The catalysed reaction is alpha-D-glucose 1-phosphate + ATP + H(+) = ADP-alpha-D-glucose + diphosphate. The protein operates within glycan biosynthesis; glycogen biosynthesis. Involved in the biosynthesis of ADP-glucose, a building block required for the elongation reactions to produce glycogen. Catalyzes the reaction between ATP and alpha-D-glucose 1-phosphate (G1P) to produce pyrophosphate and ADP-Glc. The chain is Glucose-1-phosphate adenylyltransferase from Histophilus somni (strain 129Pt) (Haemophilus somnus).